The chain runs to 1544 residues: GATOR complex protein Iml1 (1544 aa).

Disordered regions lie at residues Gln615 to Gly649 and Arg1037 to Pro1072. 2 stretches are compositionally biased toward polar residues: residues Gln623–Asn639 and Thr1041–Pro1057. Positions Phe1058–Pro1072 are enriched in basic and acidic residues.

The protein belongs to the IML1 family. In terms of assembly, component of the GATOR complex consisting of mio, Nup44A/Seh1, Im11, Nplr3, Nplr2, Wdr24, Wdr59 and Sec13. Within the GATOR complex, probable component of the GATOR1 subcomplex which is likely composed of Iml1, Nplr2 and Nplr3.

Functionally, an essential component of the GATOR subcomplex GATOR1 which functions as an inhibitor of the amino acid-sensing branch of the TORC1 signaling pathway. The two GATOR subcomplexes, GATOR1 and GATOR2, regulate the TORC1 pathway in order to mediate metabolic homeostasis, female gametogenesis and the response to amino acid limitation and complete starvation. The function of GATOR1 in negatively regulating the TORC1 pathway is essential for maintaining baseline levels of TORC1 activity under nutrient rich conditions, and for promoting survival during amino acid or complete starvation by inhibiting TORC1-dependent cell growth and promoting catabolic metabolism and autophagy. GATOR1 and GATOR2 act at different stages of oogenesis to regulate TORC1 in order to control meiotic entry and promote oocyte growth and development. After exactly four mitotic cyst divisions, the GATOR1 complex members (Iml1, Nprl2 and Nprl3) down-regulate TORC1 to slow cellular metabolism and promote the mitotic/meiotic transition. At later stages of oogenesis, the mio and Nup44A components of the GATOR2 complex inhibit GATOR1 and thus activate TORC1 to promote meiotic progression, and drive oocyte growth and development. The protein is GATOR complex protein Iml1 of Drosophila melanogaster (Fruit fly).